A 690-amino-acid polypeptide reads, in one-letter code: Calpain-9 (690 aa).

Positions 1–24 (MPYLHRSLRPQPQPVPRDARTVHS) are disordered. The 296-residue stretch at 42 to 337 (LFEDADFPAS…FDKVEICNLT (296 aa)) folds into the Calpain catalytic domain. L81, G83, and D88 together coordinate Ca(2+). The active site involves C97. E167 contributes to the Ca(2+) binding site. Residues H254 and N278 contribute to the active site. Residues E284, D291, L312, D314, and E316 each contribute to the Ca(2+) site. Residues 338–521 (PDALEDNTLH…PQEEETEEER (184 aa)) form a domain III region. A domain IV region spans residues 522–690 (QFRALFRRIA…NEFINLTMNI (169 aa)). EF-hand domains follow at residues 534 to 552 (DMEV…VLQK), 561 to 589 (LSLL…FRVF), and 591 to 626 (DKLR…AGFQ). D574, S576, N578, K580, E585, D604, D606, S608, T610, and E615 together coordinate Ca(2+).

It belongs to the peptidase C2 family. In terms of tissue distribution, predominantly expressed in stomach and small intestine, although low levels of expression in other organs.

Its function is as follows. Calcium-regulated non-lysosomal thiol-protease. This chain is Calpain-9 (Capn9), found in Rattus norvegicus (Rat).